We begin with the raw amino-acid sequence, 70 residues long: Deleted in esophageal cancer 1 (70 aa).

Expressed in many tissues, with highest expression in prostate and testis. Reduced expression in esophageal carcinomas.

In terms of biological role, candidate tumor suppressor. This is Deleted in esophageal cancer 1 from Homo sapiens (Human).